The primary structure comprises 357 residues: NmrA-like family domain-containing oxidoreductase notA' (357 aa).

NADP(+) contacts are provided by residues 13 to 18 (GATGAQ), 39 to 43 (RKPES), 60 to 61 (DG), 81 to 83 (TNS), Lys140, and 164 to 167 (YMDV).

Belongs to the NmrA-type oxidoreductase family.

In terms of biological role, nmrA-like family domain-containing oxidoreductase; part of the gene cluster that mediates the biosynthesis of notoamide, a fungal indole alkaloid that belongs to a family of natural products containing a characteristic bicyclo[2.2.2]diazaoctane core. The first step of notoamide biosynthesis involves coupling of L-proline and L-tryptophan by the bimodular NRPS notE', to produce cyclo-L-tryptophan-L-proline called brevianamide F. The reverse prenyltransferase notF' then acts as a deoxybrevianamide E synthase and converts brevianamide F to deoxybrevianamide E via reverse prenylation at C-2 of the indole ring leading to the bicyclo[2.2.2]diazaoctane core. Deoxybrevianamide E is further hydroxylated at C-6 of the indole ring, likely catalyzed by the cytochrome P450 monooxygenase notG', to yield 6-hydroxy-deoxybrevianamide E. 6-hydroxy-deoxybrevianamide E is a specific substrate of the prenyltransferase notC' for normal prenylation at C-7 to produce 6-hydroxy-7-prenyl-deoxybrevianamide, also called notoamide S. As the proposed pivotal branching point in notoamide biosynthesis, notoamide S can be diverted to notoamide E through an oxidative pyran ring closure putatively catalyzed by either notH' cytochrome P450 monooxygenase or the notD' FAD-linked oxidoreductase. This step would be followed by an indole 2,3-epoxidation-initiated pinacol-like rearrangement catalyzed by the notB' FAD-dependent monooxygenase leading to the formation of notoamide C and notoamide D. On the other hand notoamide S is converted to notoamide T by notH' (or notD'), a bifunctional oxidase that also functions as the intramolecular Diels-Alderase responsible for generation of (-)-notoamide T. To generate antipodal (+)-notoaminide T, notH (or notD) in Aspergillus strain MF297-2 is expected to catalyze a Diels-Alder reaction leading to the opposite stereochemistry. The remaining oxidoreductase notD' (or notH') likely catalyzes the oxidative pyran ring formation to yield (-)-stephacidin A. The FAD-dependent monooxygenase notI' is highly similar to notB' and is predicted to catalyze a similar conversion from (-)-stephacidin A to (+)-notoamide B via the 2,3-epoxidation of (-)-stephacidin A followed by a pinacol-type rearrangement. Finally, it remains unclear which enzyme could be responsible for the final hydroxylation steps leading to notoamide A and sclerotiamide. This chain is NmrA-like family domain-containing oxidoreductase notA', found in Aspergillus versicolor.